A 630-amino-acid polypeptide reads, in one-letter code: Plastin-1 (630 aa).

Methionine 1 carries the post-translational modification N-acetylmethionine. EF-hand domains are found at residues 11-46 (EELEELQEAFNKIDIDNSGYVSDYELQDLFKEASLP) and 51-86 (KVREIVEKILVVADNNKDGKISFEEFVSLMQELKSK). Residues aspartate 24, aspartate 26, serine 28, tyrosine 30, glutamate 35, aspartate 64, asparagine 66, aspartate 68, lysine 70, and glutamate 75 each coordinate Ca(2+). Actin-binding stretches follow at residues 108-381 (TSSI…CLHK) and 382-626 (PDNN…GKGL). Calponin-homology (CH) domains lie at 122–238 (EEEK…KVGL), 266–377 (LSPE…NTYP), 396–505 (SKEE…RRYT), and 517–626 (KVTD…GKGL).

As to quaternary structure, monomer. Phosphorylated. As to expression, in the inner ear, it is expressed in the organ of Corti. Abundant in the utricle (at protein level).

Its subcellular location is the cytoplasm. The protein resides in the cell projection. The protein localises to the stereocilium. In terms of biological role, actin-bundling protein. In the inner ear, it is required for stereocilia formation. Mediates liquid packing of actin filaments that is necessary for stereocilia to grow to their proper dimensions. The polypeptide is Plastin-1 (Pls1) (Mus musculus (Mouse)).